The sequence spans 295 residues: Tyrosine recombinase XerD (295 aa).

The Core-binding (CB) domain maps to 1-85 (METIIEEYLR…TIRSFHQFAI (85 aa)). The Tyr recombinase domain maps to 106 to 289 (KLPDVLNVDE…SKSQIRKMYN (184 aa)). Active-site residues include R146, K170, H241, R244, and H267. The active-site O-(3'-phospho-DNA)-tyrosine intermediate is the Y276.

It belongs to the 'phage' integrase family. XerD subfamily. Forms a cyclic heterotetrameric complex composed of two molecules of XerC and two molecules of XerD.

Its subcellular location is the cytoplasm. In terms of biological role, site-specific tyrosine recombinase, which acts by catalyzing the cutting and rejoining of the recombining DNA molecules. The XerC-XerD complex is essential to convert dimers of the bacterial chromosome into monomers to permit their segregation at cell division. It also contributes to the segregational stability of plasmids. The protein is Tyrosine recombinase XerD of Staphylococcus aureus (strain COL).